Here is a 101-residue protein sequence, read N- to C-terminus: Urease subunit beta (101 aa).

It belongs to the urease beta subunit family. Heterotrimer of UreA (gamma), UreB (beta) and UreC (alpha) subunits. Three heterotrimers associate to form the active enzyme.

It localises to the cytoplasm. The catalysed reaction is urea + 2 H2O + H(+) = hydrogencarbonate + 2 NH4(+). Its pathway is nitrogen metabolism; urea degradation; CO(2) and NH(3) from urea (urease route): step 1/1. The sequence is that of Urease subunit beta from Pseudomonas aeruginosa (strain LESB58).